Consider the following 470-residue polypeptide: 3-isopropylmalate dehydratase large subunit (470 aa).

[4Fe-4S] cluster contacts are provided by C348, C409, and C412.

It belongs to the aconitase/IPM isomerase family. LeuC type 1 subfamily. As to quaternary structure, heterodimer of LeuC and LeuD. It depends on [4Fe-4S] cluster as a cofactor.

The catalysed reaction is (2R,3S)-3-isopropylmalate = (2S)-2-isopropylmalate. The protein operates within amino-acid biosynthesis; L-leucine biosynthesis; L-leucine from 3-methyl-2-oxobutanoate: step 2/4. In terms of biological role, catalyzes the isomerization between 2-isopropylmalate and 3-isopropylmalate, via the formation of 2-isopropylmaleate. In Acidithiobacillus ferrooxidans (strain ATCC 23270 / DSM 14882 / CIP 104768 / NCIMB 8455) (Ferrobacillus ferrooxidans (strain ATCC 23270)), this protein is 3-isopropylmalate dehydratase large subunit.